The primary structure comprises 250 residues: Small ribosomal subunit protein uS2 (250 aa).

It belongs to the universal ribosomal protein uS2 family.

The chain is Small ribosomal subunit protein uS2 from Teredinibacter turnerae (strain ATCC 39867 / T7901).